The primary structure comprises 475 residues: Ankyrin repeat, SAM and basic leucine zipper domain-containing protein 1 (475 aa).

Phosphoserine occurs at positions 17, 18, and 20. 6 ANK repeats span residues 45 to 74 (EKNE…SVES), 78 to 107 (YGWT…NASF), 110 to 144 (DKQT…DPNV), 148 to 177 (RLMT…EVNS), 181 to 210 (NGYT…NKML), and 214 to 243 (DGKT…PLEG). Positions 272–334 (SYTAFGDLEI…KILAALKELE (63 aa)) constitute an SAM domain.

Interacts with DDX4, PIWIL1, RANBP9 and TDRD1.

It is found in the cytoplasm. Functionally, plays a central role during spermatogenesis by repressing transposable elements and preventing their mobilization, which is essential for the germline integrity. Acts via the piRNA metabolic process, which mediates the repression of transposable elements during meiosis by forming complexes composed of piRNAs and Piwi proteins and governs the methylation and subsequent repression of transposons. Its association with pi-bodies suggests a participation in the primary piRNAs metabolic process. Required prior to the pachytene stage to facilitate the production of multiple types of piRNAs, including those associated with repeats involved in the regulation of retrotransposons. May act by mediating protein-protein interactions during germ cell maturation. The protein is Ankyrin repeat, SAM and basic leucine zipper domain-containing protein 1 (ASZ1) of Mustela putorius furo (European domestic ferret).